We begin with the raw amino-acid sequence, 187 residues long: MLYNINELKVGLKVIQNKEPYVIIKNECIKPGKGQSFNRVRFKQIKSGKILEKTLKPGDLVESANIVETELIYVYRDRDLWFFMNRDSFDQISVHFDILGKSVKWMVEQLVYVVVFWDNNPILVIPPEFIKLKIIKTNLITKNISTASGNKLAVVSTGAVVKVPFFIQSGELIKVNTHSGSYISRIK.

At Lys33 the chain carries N6-(3,6-diaminohexanoyl)-5-hydroxylysine.

Belongs to the elongation factor P family. In terms of processing, may be beta-lysylated on the epsilon-amino group of Lys-33 by the combined action of EpmA and EpmB, and then hydroxylated on the C5 position of the same residue by EpmC (if this protein is present). Lysylation is critical for the stimulatory effect of EF-P on peptide-bond formation. The lysylation moiety may extend toward the peptidyltransferase center and stabilize the terminal 3-CCA end of the tRNA. Hydroxylation of the C5 position on Lys-33 may allow additional potential stabilizing hydrogen-bond interactions with the P-tRNA.

Its subcellular location is the cytoplasm. It functions in the pathway protein biosynthesis; polypeptide chain elongation. In terms of biological role, involved in peptide bond synthesis. Alleviates ribosome stalling that occurs when 3 or more consecutive Pro residues or the sequence PPG is present in a protein, possibly by augmenting the peptidyl transferase activity of the ribosome. Modification of Lys-33 is required for alleviation. The chain is Elongation factor P from Blochmanniella floridana.